The chain runs to 530 residues: MGNCCGTAGSLIQDKQKKGFKLPNPFSNEYGNHHDGLKLIVLKEPTGHEIKQKYKLGRELGRGEFGVTYLCTEIETGEIFACKSILKKKLKTSIDIEDVKREVEIMRQMPEHPNIVTLKETYEDDKAVHLVMELCEGGELFDRIVARGHYTERAAASVIKTIIEVVQMCHKHGVMHRDLKPENFLFANKKETASLKAIDFGLSVFFKPGERFNEIVGSPYYMAPEVLRRSYGQEIDIWSAGVILYILLCGVPPFWAETEHGVAKAILKSVIDFKRDPWPKVSDNAKDLIKKMLHPDPRRRLTAQQVLDHPWIQNGKNASNVSLGETVRARLKQFSVMNKLKKRALRVIAEHLSVEETSCIKERFQVMDTSNRGKITITELGIGLQKLGIVVPQDDIQILMDAGDVDKDGYLDVNEFVAISVHIRKLGNDEHLKKAFTFFDKNKSGYIEIEELRDALADDVDTTSEEVVEAIILDVDTNKDGKISYDEFATMMKTGTDWRKASRQYSRDLFKCLSLKLMQDGSLQSNGDTK.

G2 is lipidated: N-myristoyl glycine. One can recognise a Protein kinase domain in the interval 54–312 (YKLGRELGRG…AQQVLDHPWI (259 aa)). Residues 60 to 68 (LGRGEFGVT) and K83 each bind ATP. D178 acts as the Proton acceptor in catalysis. S218 is subject to Phosphoserine. The tract at residues 318-348 (ASNVSLGETVRARLKQFSVMNKLKKRALRVI) is autoinhibitory domain. EF-hand domains lie at 355–390 (EETS…LGIV), 391–426 (VPQD…IRKL), 427–462 (GNDE…DVDT), and 463–498 (TSEE…GTDW). Ca(2+) contacts are provided by D368, S370, K374, E379, D404, D406, D408, Y410, E415, D440, N442, S444, Y446, E451, D476, N478, D480, and K482. At S484 the chain carries Phosphoserine. Residue E487 coordinates Ca(2+).

This sequence belongs to the protein kinase superfamily. Ser/Thr protein kinase family. CDPK subfamily.

It localises to the membrane. The enzyme catalyses L-seryl-[protein] + ATP = O-phospho-L-seryl-[protein] + ADP + H(+). It carries out the reaction L-threonyl-[protein] + ATP = O-phospho-L-threonyl-[protein] + ADP + H(+). With respect to regulation, activated by calcium. Autophosphorylation may play an important role in the regulation of the kinase activity. May play a role in signal transduction pathways that involve calcium as a second messenger. The protein is Calcium-dependent protein kinase 14 (CPK14) of Arabidopsis thaliana (Mouse-ear cress).